The chain runs to 66 residues: Conotoxin Lt5.6 (66 aa).

Residues 1-19 (MLCLPVFIILLLLASPAAP) form the signal peptide. Positions 20–54 (KSLETRIQNDLIRAGLTDADLKTEKGFLSGLLNVA) are excised as a propeptide.

This sequence belongs to the conotoxin T superfamily. Post-translationally, contains 2 disulfide bonds that can be either 'C1-C3, C2-C4' or 'C1-C4, C2-C3', since these disulfide connectivities have been observed for conotoxins with cysteine framework V (for examples, see AC P0DQQ7 and AC P81755). Expressed by the venom duct.

The protein localises to the secreted. This is Conotoxin Lt5.6 from Conus litteratus (Lettered cone).